A 142-amino-acid chain; its full sequence is Large ribosomal subunit protein uL11 (142 aa).

This sequence belongs to the universal ribosomal protein uL11 family. As to quaternary structure, part of the ribosomal stalk of the 50S ribosomal subunit. Interacts with L10 and the large rRNA to form the base of the stalk. L10 forms an elongated spine to which L12 dimers bind in a sequential fashion forming a multimeric L10(L12)X complex. Post-translationally, one or more lysine residues are methylated.

Its function is as follows. Forms part of the ribosomal stalk which helps the ribosome interact with GTP-bound translation factors. The chain is Large ribosomal subunit protein uL11 from Buchnera aphidicola subsp. Schizaphis graminum (strain Sg).